Here is a 322-residue protein sequence, read N- to C-terminus: MRRCEVNSKPISEYFGIPCENREMAKCLLTSSLSVRTKLLQTGVSLYNTSHGFHEEEVKKILEQFPGGSIDLLKKQNGIGILTLNNPNKMNAFSGVMMLQLLERVIELENWTEGKGLIIHGAKNTFCSGSDLNAVKALSTPESGVALSMFMQNTLTRFMRLPLISVALVQGWAMGGGAELTTACDFRLMTEESVIRFVHKEMGIVPSWGGTSRLVEIIGSRQALKVLSGTLKLDSKEALNIGLTDEVLQPSDETTALEQAQEWLEKFVSGPPQVIRGLKKSVCSARELYIEEALQNERDVLETLWGGPANLEAIAKKGKHTK.

The residue at position 232 (Lys-232) is an N6-acetyllysine; alternate. At Lys-232 the chain carries N6-succinyllysine; alternate. Lys-316 is subject to N6-succinyllysine.

This sequence belongs to the enoyl-CoA hydratase/isomerase family.

It localises to the cytoplasm. It is found in the cytosol. The enzyme catalyses (2S)-ethylmalonyl-CoA + H(+) = butanoyl-CoA + CO2. It catalyses the reaction (S)-methylmalonyl-CoA + H(+) = propanoyl-CoA + CO2. It carries out the reaction (2R)-ethylmalonyl-CoA + H(+) = butanoyl-CoA + CO2. Its function is as follows. Decarboxylates ethylmalonyl-CoA, a potentially toxic metabolite, to form butyryl-CoA, suggesting it might be involved in metabolite proofreading. Acts preferentially on (S)-ethylmalonyl-CoA but also has some activity on the (R)-isomer. Also has methylmalonyl-CoA decarboxylase activity at lower level. This is Ethylmalonyl-CoA decarboxylase (Echdc1) from Mus musculus (Mouse).